Consider the following 961-residue polypeptide: Vinculin (961 aa).

Tandem repeats lie at residues 258–362 and 371–470. The segment at 258-470 is 2 X repeats; it reads ELDNLTVLKK…LTQKLYELKA (213 aa). The interval 720-778 is disordered; that stretch reads AIAPPQPPPLPTSLPPPIPELSALHLSNQNAERAPPRPPLPREGLAPVRPPPPETDDED. Residues 723–738 are compositionally biased toward pro residues; it reads PPQPPPLPTSLPPPIP. Position 774 is a phosphothreonine (threonine 774).

Belongs to the vinculin/alpha-catenin family. As to quaternary structure, exhibits self-association properties.

The protein localises to the cytoplasm. The protein resides in the cytoskeleton. It localises to the cell junction. It is found in the adherens junction. Its subcellular location is the cell membrane. Involved in cell adhesion. May be involved in the attachment of the actin-based microfilaments to the plasma membrane. The chain is Vinculin (Vinc) from Drosophila melanogaster (Fruit fly).